The following is a 711-amino-acid chain: Nuclear intron maturase 1, mitochondrial (711 aa).

In terms of domain architecture, Reverse transcriptase spans 147–459 (KDKISMNGGE…RGIQFLDHII (313 aa)). The segment at 484 to 653 (GTLLSVSASL…QVLQEYIRLQ (170 aa)) is intron maturase type-2.

It belongs to the plant nuclear intron maturase (nMat) family. In terms of tissue distribution, expressed at low levels in seedlings and accumulates in adult plants.

The protein resides in the mitochondrion. In terms of biological role, nuclear-encoded maturase required for splicing of group-II introns in mitochondria. Necessary for mitochondrial biogenesis during early developmental stages. Involved in the splicing of mitochondrial NAD4 transcripts. Required for trans-splicing of NAD1 intron 1 and also functions in cis-splicing of NAD2 intron 1 and NAD4 intron 2. Required for the regulation of fundamental metabolic pathways such as amino acid metabolism, triacylglycerol degradation and polysaccharide synthesis (cellulose and starch) during the early stage of plant growth. Implicated in stress responses. In Arabidopsis thaliana (Mouse-ear cress), this protein is Nuclear intron maturase 1, mitochondrial.